We begin with the raw amino-acid sequence, 162 residues long: Peptide deformylase-like (162 aa).

This sequence belongs to the polypeptide deformylase family.

The protein is Peptide deformylase-like of Staphylococcus aureus (strain COL).